A 154-amino-acid chain; its full sequence is Dau c 1 isoallergen Dau c 1.0301 (154 aa).

Belongs to the BetVI family. As to expression, expressed in roots.

The chain is Dau c 1 isoallergen Dau c 1.0301 from Daucus carota (Wild carrot).